We begin with the raw amino-acid sequence, 411 residues long: MDAALLLSLLEANCSLALAEELLLDGWGVPPDPEGPYTYCNTTLDQIGTCWPQSAPGALVERPCPEYFNGIKYNTTRNAYRECLENGTWASRVNYSHCEPILDDKQRKYDLHYRIALIVNYLGHCVSVVALVAAFLLFLVLRSIRCLRNVIHWNLITTFILRNIAWFLLQLIDHEVHEGNEVWCRCITTIFNYFVVTNFFWMFVEGCYLHTAIVMTYSTEHLRKWLFLFIGWCIPCPIIIAWAVGKLYYENEQCWFGKEAGDLVDYIYQGPVMLVLLINFVFLFNIVRILMTKLRASTTSETIQYRKAVKATLVLLPLLGITYMLFFVNPGEDDLSQIVFIYFNSFLQSFQGFFVSVFYCFFNGEVRAALRKRWHRWQDHHALRVPVARAMSIPTSPTRISFHSIKQTAAV.

Residues 1–19 constitute a signal peptide (not cleaved); the sequence is MDAALLLSLLEANCSLALA. The Extracellular segment spans residues 1–108; sequence MDAALLLSLL…EPILDDKQRK (108 aa). N-linked (GlcNAc...) asparagine glycans are attached at residues asparagine 13, asparagine 41, asparagine 74, asparagine 86, and asparagine 94. Intrachain disulfides connect cysteine 14/cysteine 50, cysteine 40/cysteine 83, and cysteine 64/cysteine 98. Residues 109-139 traverse the membrane as a helical segment; the sequence is YDLHYRIALIVNYLGHCVSVVALVAAFLLFL. Residues 140-146 are Cytoplasmic-facing; the sequence is VLRSIRC. A helical transmembrane segment spans residues 147–171; sequence LRNVIHWNLITTFILRNIAWFLLQL. Topologically, residues 172–185 are extracellular; that stretch reads IDHEVHEGNEVWCR. Cysteine 184 and cysteine 254 are disulfide-bonded. Residues 186–214 form a helical membrane-spanning segment; it reads CITTIFNYFVVTNFFWMFVEGCYLHTAIV. Topologically, residues 215 to 221 are cytoplasmic; it reads MTYSTEH. Residues 222-249 form a helical membrane-spanning segment; it reads LRKWLFLFIGWCIPCPIIIAWAVGKLYY. Residues 250–265 are Extracellular-facing; that stretch reads ENEQCWFGKEAGDLVD. Residues 266 to 291 traverse the membrane as a helical segment; that stretch reads YIYQGPVMLVLLINFVFLFNIVRILM. The Cytoplasmic segment spans residues 292 to 302; it reads TKLRASTTSET. The chain crosses the membrane as a helical span at residues 303–327; the sequence is IQYRKAVKATLVLLPLLGITYMLFF. Topologically, residues 328–334 are extracellular; the sequence is VNPGEDD. Residues 335–364 form a helical membrane-spanning segment; sequence LSQIVFIYFNSFLQSFQGFFVSVFYCFFNG. At 365-411 the chain is on the cytoplasmic side; the sequence is EVRAALRKRWHRWQDHHALRVPVARAMSIPTSPTRISFHSIKQTAAV.

The protein belongs to the G-protein coupled receptor 2 family. Monomer. Interacts with CRF, UCN, UCN2 and UCN3. Post-translationally, a N-glycosylation site within the signal peptide impedes its proper cleavage and function. Highly expressed in the heart. Also expressed in lungs, skeletal muscle, gastrointestinal tract, epididymis, and brain.

Its subcellular location is the cell membrane. Its function is as follows. G-protein coupled receptor for CRH (corticotropin-releasing factor), UCN (urocortin), UCN2 and UCN3. Has high affinity for UCN. Ligand binding causes a conformation change that triggers signaling via guanine nucleotide-binding proteins (G proteins) and down-stream effectors, such as adenylate cyclase. Promotes the activation of adenylate cyclase, leading to increased intracellular cAMP levels. This is Corticotropin-releasing factor receptor 2 (Crhr2) from Mus musculus (Mouse).